The following is a 641-amino-acid chain: Chaperone protein DnaK (641 aa).

The residue at position 198 (T198) is a Phosphothreonine; by autocatalysis. Basic and acidic residues-rich tracts occupy residues 514–529 (AEAN…EGVE), 540–554 (SSEK…KVSE), and 608–621 (AHAD…RSGD). Disordered regions lie at residues 514 to 554 (AEAN…KVSE) and 604 to 641 (QTES…KRSA). Over residues 622–633 (DVVDADYEEVKD) the composition is skewed to acidic residues.

The protein belongs to the heat shock protein 70 family.

Acts as a chaperone. This chain is Chaperone protein DnaK, found in Sinorhizobium medicae (strain WSM419) (Ensifer medicae).